Consider the following 743-residue polypeptide: Dolichyl-phosphooligosaccharide-protein glycotransferase 2 (743 aa).

At 1–7 (MKIDKRL) the chain is on the cytoplasmic side. A helical membrane pass occupies residues 8–28 (MVIVAIATLFRMIPFRLKYLV). The short motif at 29-31 (GSD) is the DXD motif 1 element. At 29–91 (GSDPYFHLAY…FSFLGISLYT (63 aa)) the chain is on the extracellular side. Asp31 contacts Mn(2+). A helical transmembrane segment spans residues 92 to 112 (AFRVTPVIFGVLTVVFFYLSL). The Cytoplasmic portion of the chain corresponds to 113–119 (KKLYNRD). A helical membrane pass occupies residues 120-140 (VAFIVGLFLGVNYGHIFRSMA). Residues 141–144 (NYYR) lie on the Extracellular side of the membrane. Positions 144 and 146 each coordinate Mn(2+). Positions 144 to 146 (RGD) match the DXD motif 2 motif. A helical transmembrane segment spans residues 145–165 (GDNYMLFWYSVALLGIALGLK). Topologically, residues 166-170 (TRSKY) are cytoplasmic. 2 consecutive transmembrane segments (helical) span residues 171 to 191 (RYLFYLLPGIATGFASAFWQA) and 192 to 212 (YYPIFVFVLAGGLLLGVYAYL). Over 213–216 (KSPK) the chain is Cytoplasmic. Residues 217 to 237 (LFLDSILIVLSTGLGVLIANI) form a helical membrane-spanning segment. The Extracellular portion of the chain corresponds to 238 to 272 (LGDKVGYGMLGYTDWMGKKVAETFGLEFGFIKDAY). Residues 273–293 (LLIHVKYLLPLSLVFLGFLII) form a helical membrane-spanning segment. At 294–302 (TKKLNPKIK) the chain is on the cytoplasmic side. Residues 303-323 (VGVLVGGSILAFIVMLVKFPA) form a helical membrane-spanning segment. The Extracellular segment spans residues 324–345 (LKDLSTGFGTFREVPISETLPP). The TIXE motif signature appears at 333-336 (TFRE). The chain crosses the membrane as a helical span at residues 346-366 (TLDDLWRAYNIAIFLAALYIL). Topologically, residues 367-373 (RLRKIRS) are cytoplasmic. Residues 374–391 (GDAILLGYVITSLWMLRY) form a helical membrane-spanning segment. Over 392–394 (WTR) the chain is Extracellular. Arg394 contributes to the a glycophospholipid binding site. Residues 395-415 (FLFTAAPAVAFLSGIGVYELT) form a helical membrane-spanning segment. Topologically, residues 416–424 (RRIKENKIR) are cytoplasmic. A helical transmembrane segment spans residues 425–445 (ITSLGVVILLSSAFSLGEVYS). At 446 to 743 (VKPFMNENWE…LDRGIVRVKN (298 aa)) the chain is on the extracellular side. The tract at residues 474-476 (WWD) is interacts with target acceptor peptide in protein substrate. Positions 474-478 (WWDWG) match the WWDYG motif motif. The short motif at 526-533 (DILKFEAI) is the DK motif element.

This sequence belongs to the STT3 family. It depends on Mn(2+) as a cofactor. Mg(2+) is required as a cofactor.

The protein localises to the cell membrane. The enzyme catalyses an archaeal dolichyl phosphooligosaccharide + [protein]-L-asparagine = an archaeal dolichyl phosphate + a glycoprotein with the oligosaccharide chain attached by N-beta-D-glycosyl linkage to a protein L-asparagine.. It functions in the pathway protein modification; protein glycosylation. Oligosaccharyl transferase (OST) that catalyzes the initial transfer of a defined glycan (ManNAcXyl(2)GlcAMan(2)GalNAc in P.furiosus) from the lipid carrier dolichol-monophosphate to an asparagine residue within an Asn-X-Ser/Thr consensus motif in nascent polypeptide chains, the first step in protein N-glycosylation. The sequence is that of Dolichyl-phosphooligosaccharide-protein glycotransferase 2 (aglB2) from Pyrococcus furiosus (strain ATCC 43587 / DSM 3638 / JCM 8422 / Vc1).